A 508-amino-acid chain; its full sequence is UBX domain-containing protein 4 (508 aa).

Residues 1-200 (MLWFQGAIPA…PAEDLNIRVE (200 aa)) are interaction with UBQLN1. Topologically, residues 1 to 413 (MLWFQGAIPA…VHSSSGDIWT (413 aa)) are cytoplasmic. 2 stretches are compositionally biased toward polar residues: residues 117–151 (SETS…QSRN) and 160–187 (TSDT…SGCS). The tract at residues 117–196 (SETSVANGSQ…SDQRPAEDLN (80 aa)) is disordered. Positions 315–393 (ERSTVARIQF…ELAPSASVVL (79 aa)) constitute a UBX domain. An intramembrane segment occupies 414 to 434 (LLGTVLYPFLAIWRLISNFLF). Over 435–508 (SNPPPTQTSV…TWNGNSTQQM (74 aa)) the chain is Cytoplasmic. The interval 440–508 (TQTSVRVTSS…TWNGNSTQQM (69 aa)) is disordered. Residues 441-458 (QTSVRVTSSEPPNPASSS) show a composition bias toward polar residues. The segment covering 459-491 (KSEKREPVRKRVLEKRGDDFKKEGKIYRLRTQD) has biased composition (basic and acidic residues). The residue at position 489 (threonine 489) is a Phosphothreonine. Polar residues predominate over residues 498-508 (NTWNGNSTQQM).

In terms of assembly, directly interacts with VCP. Interacts with UBQLN1. Forms a complex with VCP and UBQLN1. As to expression, expressed in many tissues, including heart, brain, placenta, lung, liver, skeletal muscle, kidney and pancreas. Accumulates in Alzheimer disease-afflicted brains (at protein level).

Its subcellular location is the endoplasmic reticulum membrane. The protein localises to the nucleus envelope. Its function is as follows. Involved in endoplasmic reticulum-associated protein degradation (ERAD). Acts as a platform to recruit both UBQLN1 and VCP to the ER during ERAD. The protein is UBX domain-containing protein 4 (UBXN4) of Homo sapiens (Human).